Consider the following 836-residue polypeptide: RNA-binding protein 12B-A (836 aa).

The RRM 1 domain maps to 154–229 (PYLFLRGLPY…RFIEVMQGSE (76 aa)). Residues 237–277 (GTATEGGDTPRMRSEEHSPSRRINGRHFRKRSHSKSPRARS) form a disordered region. Over residues 244–255 (DTPRMRSEEHSP) the composition is skewed to basic and acidic residues. The segment covering 259-277 (INGRHFRKRSHSKSPRARS) has biased composition (basic residues). RRM domains follow at residues 283-359 (FYVH…PVSR) and 401-478 (LCIY…LISE). Disordered regions lie at residues 539–572 (GHFK…PWEE) and 620–644 (SQEH…RRSR). Positions 550 to 572 (QSDRRSPEDFRHSPEDYRHPWEE) are enriched in basic and acidic residues. The residue at position 703 (S703) is a Phosphoserine. K758 is subject to N6-acetyllysine. Positions 760-836 (IPVKISNLPF…GPRKVKLSLL (77 aa)) constitute an RRM 4 domain.

This chain is RNA-binding protein 12B-A (Rbm12b1), found in Mus musculus (Mouse).